Consider the following 425-residue polypeptide: Glucose-6-phosphate 1-dehydrogenase (425 aa).

NADP(+)-binding residues include Arg44 and Lys135. Substrate is bound by residues His165, Lys169, Glu201, and Asp220. His225 serves as the catalytic Proton acceptor. Lys311 is a substrate binding site.

This sequence belongs to the glucose-6-phosphate dehydrogenase family.

It carries out the reaction D-glucose 6-phosphate + NADP(+) = 6-phospho-D-glucono-1,5-lactone + NADPH + H(+). The protein operates within carbohydrate degradation; pentose phosphate pathway; D-ribulose 5-phosphate from D-glucose 6-phosphate (oxidative stage): step 1/3. Catalyzes the oxidation of glucose 6-phosphate to 6-phosphogluconolactone. The sequence is that of Glucose-6-phosphate 1-dehydrogenase from Helicobacter pylori (strain ATCC 700392 / 26695) (Campylobacter pylori).